Reading from the N-terminus, the 176-residue chain is ATP-dependent protease subunit HslV (176 aa).

Threonine 6 is a catalytic residue. Residues glycine 161, cysteine 164, and threonine 167 each contribute to the Na(+) site.

This sequence belongs to the peptidase T1B family. HslV subfamily. In terms of assembly, a double ring-shaped homohexamer of HslV is capped on each side by a ring-shaped HslU homohexamer. The assembly of the HslU/HslV complex is dependent on binding of ATP.

The protein localises to the cytoplasm. It catalyses the reaction ATP-dependent cleavage of peptide bonds with broad specificity.. Its activity is regulated as follows. Allosterically activated by HslU binding. In terms of biological role, protease subunit of a proteasome-like degradation complex believed to be a general protein degrading machinery. The protein is ATP-dependent protease subunit HslV of Thermotoga sp. (strain RQ2).